A 405-amino-acid polypeptide reads, in one-letter code: Palmitoyltransferase PFA5 (405 aa).

Transmembrane regions (helical) follow at residues Tyr12–Ile32, Ile51–Ile71, Leu154–Cys174, Phe191–Ile211, and Phe310–Ile330. Residues Tyr111 to Met161 enclose the DHHC domain.

The protein belongs to the DHHC palmitoyltransferase family. PFA5 subfamily. Post-translationally, autopalmitoylated.

The protein localises to the membrane. The catalysed reaction is L-cysteinyl-[protein] + hexadecanoyl-CoA = S-hexadecanoyl-L-cysteinyl-[protein] + CoA. This is Palmitoyltransferase PFA5 (PFA5) from Candida albicans (strain SC5314 / ATCC MYA-2876) (Yeast).